A 214-amino-acid polypeptide reads, in one-letter code: GTP-binding nuclear protein GSP1/Ran (214 aa).

The region spanning 4–168 is the Small GTPase Ran-type domain; sequence EVAAFKLVLV…LWLARKLAGN (165 aa). Residue 15–22 participates in GTP binding; sequence DGGTGKTT. Residues 34-42 are switch-I; that stretch reads NRYNATLGV. Residues Gly-65, 119–122, and 147–149 each bind GTP; these read NKVD and SAK. The interval 65–81 is switch-II; that stretch reads GQEKFGGLRDGYYINGQ.

Belongs to the small GTPase superfamily. Ran family. In terms of assembly, found in a nuclear export complex with RanGTP, exportin and pre-miRNA.

The protein localises to the nucleus. Functionally, GTP-binding protein involved in nucleocytoplasmic transport. Required for the import of protein into the nucleus and also for RNA export. Involved in chromatin condensation and control of cell cycle. This chain is GTP-binding nuclear protein GSP1/Ran (GSP1), found in Yarrowia lipolytica (strain CLIB 122 / E 150) (Yeast).